A 358-amino-acid polypeptide reads, in one-letter code: Uptake hydrogenase small subunit (358 aa).

A signal peptide (tat-type signal) is located at residues 1 to 45 (MSRLETFYDVMRRQGITRRSFLKYCSLTAAALGLGPAFAPRIAHA). [4Fe-4S] cluster-binding residues include cysteine 62, cysteine 65, cysteine 160, cysteine 194, histidine 232, cysteine 235, cysteine 260, and cysteine 266. Residues cysteine 275, cysteine 294, and cysteine 297 each coordinate [3Fe-4S] cluster.

This sequence belongs to the [NiFe]/[NiFeSe] hydrogenase small subunit family. In terms of assembly, heterodimer of a large and a small subunit. It depends on [4Fe-4S] cluster as a cofactor. [3Fe-4S] cluster serves as cofactor. Predicted to be exported by the Tat system. The position of the signal peptide cleavage has been experimentally proven.

The protein localises to the cell membrane. The catalysed reaction is H2 + A = AH2. This enzyme recycles the H(2) produced by nitrogenase to increase the production of ATP and to protect nitrogenase against inhibition or damage by O(2) under carbon- or phosphate-limited conditions. The sequence is that of Uptake hydrogenase small subunit (hoxK) from Azotobacter vinelandii.